We begin with the raw amino-acid sequence, 214 residues long: Urease accessory protein UreF (214 aa).

A disordered region spans residues 70–95 (AAAGEAGDAETDARTPSPAARAASRA). Over residues 83 to 95 (RTPSPAARAASRA) the composition is skewed to low complexity.

This sequence belongs to the UreF family. UreD, UreF and UreG form a complex that acts as a GTP-hydrolysis-dependent molecular chaperone, activating the urease apoprotein by helping to assemble the nickel containing metallocenter of UreC. The UreE protein probably delivers the nickel.

It is found in the cytoplasm. In terms of biological role, required for maturation of urease via the functional incorporation of the urease nickel metallocenter. In Mycolicibacterium vanbaalenii (strain DSM 7251 / JCM 13017 / BCRC 16820 / KCTC 9966 / NRRL B-24157 / PYR-1) (Mycobacterium vanbaalenii), this protein is Urease accessory protein UreF.